Reading from the N-terminus, the 427-residue chain is Glutamate-1-semialdehyde 2,1-aminomutase (427 aa).

Lysine 265 is subject to N6-(pyridoxal phosphate)lysine.

It belongs to the class-III pyridoxal-phosphate-dependent aminotransferase family. HemL subfamily. Homodimer. The cofactor is pyridoxal 5'-phosphate.

The protein resides in the cytoplasm. It carries out the reaction (S)-4-amino-5-oxopentanoate = 5-aminolevulinate. It functions in the pathway porphyrin-containing compound metabolism; protoporphyrin-IX biosynthesis; 5-aminolevulinate from L-glutamyl-tRNA(Glu): step 2/2. The polypeptide is Glutamate-1-semialdehyde 2,1-aminomutase (Pseudomonas syringae pv. syringae (strain B728a)).